A 1704-amino-acid chain; its full sequence is ABC transporter ced-7 (1704 aa).

Residues 23–43 (VWTLFELIIPCLLLGPLVYLV) traverse the membrane as a helical segment. N-linked (GlcNAc...) asparagine glycans are attached at residues Asn-126 and Asn-145. 3 consecutive transmembrane segments (helical) span residues 256-276 (AFID…VIHI), 306-326 (VVMA…PLTF), and 334-354 (AALI…GAFV). A glycan (N-linked (GlcNAc...) asparagine) is linked at Asn-359. The next 2 membrane-spanning stretches (helical) occupy residues 362 to 382 (NSAI…SYKL) and 389 to 409 (ISSC…AVEA). Residues Asn-421 and Asn-427 are each glycosylated (N-linked (GlcNAc...) asparagine). Residues 436–456 (GWALVMMIVDILWMSIGALVV) traverse the membrane as a helical segment. N-linked (GlcNAc...) asparagine glycosylation occurs at Asn-481. The interval 511–536 (NPMASTSLNPPNADSDSLLEGSTEAD) is disordered. Residues 512 to 525 (PMASTSLNPPNADS) are compositionally biased toward polar residues. One can recognise an ABC transporter 1 domain in the interval 546–777 (IIVRNLVKIW…FGTGYLLTVV (232 aa)). 580-587 (GHNGAGKS) provides a ligand contact to ATP. Asn-678, Asn-727, and Asn-899 each carry an N-linked (GlcNAc...) asparagine glycan. Composition is skewed to polar residues over residues 888–902 (RQNS…NASE) and 911–921 (DTQSSTKSADS). The interval 888 to 933 (RQNSRISHNSRNASEPSLKPAGYDTQSSTKSADSYQKLMDSQARGP) is disordered. A helical membrane pass occupies residues 963 to 983 (LFTQVLIPIILLGLVGSLTTL). Asn-986, Asn-1012, and Asn-1045 each carry an N-linked (GlcNAc...) asparagine glycan. Transmembrane regions (helical) follow at residues 1126–1146 (LAPM…MFLI), 1153–1173 (FAHQ…ASLI), 1176–1196 (GILY…FHWM), 1201–1221 (AIVI…IYAV), 1234–1254 (LLII…FLIF), 1266–1286 (ILVN…AIIT), and 1311–1331 (LMGT…FKFV). The region spanning 1379-1603 (LVIKDLTKTF…YGNNYTMTLS (225 aa)) is the ABC transporter 2 domain. Residue 1411-1418 (GVNGAGKT) participates in ATP binding. Residues Asn-1597 and Asn-1632 are each glycosylated (N-linked (GlcNAc...) asparagine).

Belongs to the ABC transporter superfamily. ABCA family. Ubiquitous in embryos. Expressed in larval germline precursors. Expression in larvae and adults is seen in amphid sheath cells, pharyngeal-intestinal valve and phasmid sheath cells. Low levels of expression are also seen in gonadal sheath cells.

Its subcellular location is the membrane. Its function is as follows. Functions in the engulfment of cell corpses during embryonic programmed cell death to translocate molecules that mediate homotypic adhesion between cell surfaces of the dying and engulfing cells. This Caenorhabditis elegans protein is ABC transporter ced-7 (ced-7).